The following is a 74-amino-acid chain: Transcription attenuation protein MtrB (74 aa).

Belongs to the MtrB family. In terms of assembly, oligomer of 11 identical subunits arranged in doughnut-like structure.

Required for transcription attenuation control in the Trp operon. This trans-acting factor seems to recognize a 10 bases nucleotide sequence in the Trp leader transcript causing transcription termination. Binds the leader RNA only in presence of L-tryptophan. The chain is Transcription attenuation protein MtrB from Geobacillus sp. (strain WCH70).